The chain runs to 557 residues: Potassium-transporting ATPase potassium-binding subunit (557 aa).

12 consecutive transmembrane segments (helical) span residues 5 to 25 (GFLLIATFLLVLMVLARPLGS), 63 to 83 (LCAILGLNMLGLAVLFFMLLG), 132 to 152 (GLTVQNFLSAASGIAVIFALI), 170 to 190 (LLRITLWVLAPVALLIALFFI), 253 to 273 (FVQMLAIFLIPTALCFAFGEV), 283 to 303 (LLWAMSVIFVICVGVVMWAEV), 329 to 349 (VLVSSLFAVVTTAASCGAVIA), 356 to 376 (ALGGMVPMWLMQIGEVVFGGV), 379 to 399 (GLYGMMLFVLLAVFIAGLMIG), 416 to 436 (LTALAILVTPTLVLMGAALAM), 484 to 504 (LLALCMFVGRFGVIIPVMAIA), and 526 to 546 (LFVGLLIGTVLLVGALTFIPA).

The protein belongs to the KdpA family. The system is composed of three essential subunits: KdpA, KdpB and KdpC.

It is found in the cell inner membrane. In terms of biological role, part of the high-affinity ATP-driven potassium transport (or Kdp) system, which catalyzes the hydrolysis of ATP coupled with the electrogenic transport of potassium into the cytoplasm. This subunit binds the periplasmic potassium ions and delivers the ions to the membrane domain of KdpB through an intramembrane tunnel. The polypeptide is Potassium-transporting ATPase potassium-binding subunit (Escherichia coli O81 (strain ED1a)).